The following is a 129-amino-acid chain: Flagellar assembly factor FliW (129 aa).

The protein belongs to the FliW family. In terms of assembly, interacts with translational regulator CsrA and flagellin(s).

It is found in the cytoplasm. In terms of biological role, acts as an anti-CsrA protein, binds CsrA and prevents it from repressing translation of its target genes, one of which is flagellin. Binds to flagellin and participates in the assembly of the flagellum. In Campylobacter jejuni subsp. doylei (strain ATCC BAA-1458 / RM4099 / 269.97), this protein is Flagellar assembly factor FliW.